The following is a 163-amino-acid chain: NADH-quinone oxidoreductase subunit I (163 aa).

4Fe-4S ferredoxin-type domains follow at residues 54–84 and 94–123; these read LRRYPNGEERCIACKLCEAVCPAMAITIESE and TRYDIDLTKCIFCGFCEESCPVDSIVETRI. Residues C64, C67, C70, C74, C103, C106, C109, and C113 each coordinate [4Fe-4S] cluster.

Belongs to the complex I 23 kDa subunit family. As to quaternary structure, NDH-1 is composed of 14 different subunits. Subunits NuoA, H, J, K, L, M, N constitute the membrane sector of the complex. The cofactor is [4Fe-4S] cluster.

The protein localises to the cell inner membrane. The enzyme catalyses a quinone + NADH + 5 H(+)(in) = a quinol + NAD(+) + 4 H(+)(out). In terms of biological role, NDH-1 shuttles electrons from NADH, via FMN and iron-sulfur (Fe-S) centers, to quinones in the respiratory chain. The immediate electron acceptor for the enzyme in this species is believed to be ubiquinone. Couples the redox reaction to proton translocation (for every two electrons transferred, four hydrogen ions are translocated across the cytoplasmic membrane), and thus conserves the redox energy in a proton gradient. This Methylobacillus flagellatus (strain ATCC 51484 / DSM 6875 / VKM B-1610 / KT) protein is NADH-quinone oxidoreductase subunit I.